A 239-amino-acid polypeptide reads, in one-letter code: ATP synthase subunit a (239 aa).

Helical transmembrane passes span 17-37 (GTVC…VYFF), 75-95 (FHLL…IGLI), 113-133 (DPFV…LFGV), 182-202 (LLTL…PLAI), and 206-226 (MVWI…FVTL).

It belongs to the ATPase A chain family. In terms of assembly, F-type ATPases have 2 components, CF(1) - the catalytic core - and CF(0) - the membrane proton channel. CF(1) has five subunits: alpha(3), beta(3), gamma(1), delta(1), epsilon(1). CF(0) has three main subunits: a(1), b(2) and c(9-12). The alpha and beta chains form an alternating ring which encloses part of the gamma chain. CF(1) is attached to CF(0) by a central stalk formed by the gamma and epsilon chains, while a peripheral stalk is formed by the delta and b chains.

It is found in the cell membrane. Its function is as follows. Key component of the proton channel; it plays a direct role in the translocation of protons across the membrane. The protein is ATP synthase subunit a of Enterococcus hirae (strain ATCC 9790 / DSM 20160 / JCM 8729 / LMG 6399 / NBRC 3181 / NCIMB 6459 / NCDO 1258 / NCTC 12367 / WDCM 00089 / R).